Here is a 771-residue protein sequence, read N- to C-terminus: MNSLVKGISKVRSTRSFSTVSMSPLEPNKKLNYEGIDAKLKQFRLHHNKPLTLAEKIIYGHLEDPSTKVERGITYLKLHPDRVAMQDATAQMAVLQFMSAGLPETAVPTTIHCDHLIEAYKGGEKDLEVAKDINKEVYDFLSTSAKKFGMGFWKPGSGIIHQIVLENYAFPGGLMIGTDSHTPNAGGLGMVAVGVGGADAVDVMAGIPWELKAPKIIGVKLTGSLKGWSSPKDVILRVADILTVKGGTGAIVEYFGSGVESLSCTGMATICNMGAEIGATTSLFPFNKRMVDYLNSTGRSNIANAANSFKHNLVADPNAHYDQLIELNLDTLEPYINGPFTPDLGHPLSKFAESVKTNNWPAELKVGLIGSCTNSSYEDMSRSASVAQQALDKGITAKAKFTITPGSEQIRATIERDGQMKVLEKVGGVVLANACGPCIGQWKREDVPKGEKNSIITSYNRNFTGRNDSNVNTHAFVASPEIVTALTIAGDITFNPMTDFLTDKDGNKFKLTPPTGDELPSRGFDAGENTYQPPSPNGQNINVIVDSESSRLQLLQPFAPWDKKDLVDMQVLIKVQGKCTTDHISMAGPWLKYRGHLDNISNNMLIGAINSENGKANAVLNQFTGEIGPVPTVARDYKKRGVNWIVVGDENYGEGSSREHAALEPRHLGGKAILVKSFARIHETNLKKQGILPLTFANPSDYDKISGDDRISIIGLKDLAPGKQLTLIVKSAKQGSEFEIKANHTMNAGQIEWFKAGSALNYIKSEKAKKN.

Substrate contacts are provided by residues glutamine 86 and 179–181 (DSH). Residues cysteine 372, cysteine 435, and cysteine 438 each contribute to the [4Fe-4S] cluster site. Substrate is bound by residues arginine 461, arginine 466, arginine 594, and 657-658 (SR).

The protein belongs to the aconitase/IPM isomerase family. In terms of assembly, monomer. [4Fe-4S] cluster is required as a cofactor.

The protein localises to the mitochondrion. It carries out the reaction citrate = D-threo-isocitrate. It functions in the pathway carbohydrate metabolism; tricarboxylic acid cycle; isocitrate from oxaloacetate: step 2/2. Its function is as follows. Catalyzes the isomerization of citrate to isocitrate via cis-aconitate. This Dictyostelium discoideum (Social amoeba) protein is Probable aconitate hydratase, mitochondrial (aco2).